The sequence spans 463 residues: uncharacterized protein (463 aa).

Positions 13 to 81 (IPLYQQLYRY…PRSGWFADYH (69 aa)) constitute an HTH gntR-type domain. Positions 41–60 (KRLLANQLSISQTTVERAYE) form a DNA-binding region, H-T-H motif. N6-(pyridoxal phosphate)lysine is present on Lys-308.

This sequence in the C-terminal section; belongs to the class-I pyridoxal-phosphate-dependent aminotransferase family. Pyridoxal 5'-phosphate serves as cofactor.

This is an uncharacterized protein from Bacillus subtilis (strain 168).